Here is a 37-residue protein sequence, read N- to C-terminus: Large ribosomal subunit protein bL36 (37 aa).

The protein belongs to the bacterial ribosomal protein bL36 family.

This is Large ribosomal subunit protein bL36 from Acetivibrio thermocellus (strain ATCC 27405 / DSM 1237 / JCM 9322 / NBRC 103400 / NCIMB 10682 / NRRL B-4536 / VPI 7372) (Clostridium thermocellum).